Consider the following 169-residue polypeptide: Cell division inhibitor SulA (169 aa).

Residues 106-112 (ALRTGNY) form a ftsZ binding region. The segment at 162–169 (KIHSNLYH) is lon protease binding.

The protein belongs to the SulA family. Interacts with FtsZ. Post-translationally, is rapidly cleaved and degraded by the Lon protease once DNA damage is repaired.

Component of the SOS system and an inhibitor of cell division. Accumulation of SulA causes rapid cessation of cell division and the appearance of long, non-septate filaments. In the presence of GTP, binds a polymerization-competent form of FtsZ in a 1:1 ratio, thus inhibiting FtsZ polymerization and therefore preventing it from participating in the assembly of the Z ring. This mechanism prevents the premature segregation of damaged DNA to daughter cells during cell division. In Escherichia fergusonii (strain ATCC 35469 / DSM 13698 / CCUG 18766 / IAM 14443 / JCM 21226 / LMG 7866 / NBRC 102419 / NCTC 12128 / CDC 0568-73), this protein is Cell division inhibitor SulA.